The sequence spans 636 residues: Biosynthetic arginine decarboxylase (636 aa).

N6-(pyridoxal phosphate)lysine is present on Lys-110. 290–300 is a substrate binding site; that stretch reads IDVGGGLGVDY.

It belongs to the Orn/Lys/Arg decarboxylase class-II family. SpeA subfamily. Mg(2+) serves as cofactor. It depends on pyridoxal 5'-phosphate as a cofactor.

It catalyses the reaction L-arginine + H(+) = agmatine + CO2. Its function is as follows. Catalyzes the biosynthesis of agmatine from arginine. The sequence is that of Biosynthetic arginine decarboxylase from Pseudomonas aeruginosa (strain ATCC 15692 / DSM 22644 / CIP 104116 / JCM 14847 / LMG 12228 / 1C / PRS 101 / PAO1).